We begin with the raw amino-acid sequence, 365 residues long: Cobalt-precorrin-5B C(1)-methyltransferase (365 aa).

This sequence belongs to the CbiD family.

It carries out the reaction Co-precorrin-5B + S-adenosyl-L-methionine = Co-precorrin-6A + S-adenosyl-L-homocysteine. It participates in cofactor biosynthesis; adenosylcobalamin biosynthesis; cob(II)yrinate a,c-diamide from sirohydrochlorin (anaerobic route): step 6/10. Functionally, catalyzes the methylation of C-1 in cobalt-precorrin-5B to form cobalt-precorrin-6A. This is Cobalt-precorrin-5B C(1)-methyltransferase from Methanococcus maripaludis (strain C5 / ATCC BAA-1333).